The chain runs to 206 residues: MEIILKYFPDLTEEQRKQFAALYDLYIDWNAKINVISRKDIENLYEHHVLHSLGIAKVIQFRPGTKVMDLGTGGGFPGIPLAILFPETKFHLVDSIGKKVRVATEVANAIGLKNVTFRHARAEEEKQLFDFVVSRAVMPLADLIKIIKKNISPKQQNAMPNGLICLKGGELEHETMPFKHKTVIHSLSENFEEEFFETKKVVYSQI.

S-adenosyl-L-methionine contacts are provided by residues G71, F76, 122–123 (AE), and R135.

The protein belongs to the methyltransferase superfamily. RNA methyltransferase RsmG family.

The protein resides in the cytoplasm. Specifically methylates the N7 position of a guanine in 16S rRNA. The polypeptide is Ribosomal RNA small subunit methyltransferase G (Bacteroides thetaiotaomicron (strain ATCC 29148 / DSM 2079 / JCM 5827 / CCUG 10774 / NCTC 10582 / VPI-5482 / E50)).